Here is a 511-residue protein sequence, read N- to C-terminus: Movement protein (511 aa).

The protein resides in the host cell junction. The protein localises to the host plasmodesma. Its subcellular location is the host cytoplasm. Functionally, transports viral genome to neighboring plant cells directly through plasmosdesmata, without any budding. The movement protein allows efficient cell to cell propagation, by bypassing the host cell wall barrier. The chain is Movement protein from Rice gall dwarf virus (RGDV).